We begin with the raw amino-acid sequence, 671 residues long: DNA ligase (671 aa).

NAD(+) is bound by residues 32 to 36 (DAEYD), 81 to 82 (SL), and Glu113. Lys115 functions as the N6-AMP-lysine intermediate in the catalytic mechanism. 4 residues coordinate NAD(+): Arg136, Glu173, Lys290, and Lys314. The Zn(2+) site is built by Cys408, Cys411, Cys426, and Cys432. The region spanning 593-671 (EIDSPFAGKT…EAEMLRLLGS (79 aa)) is the BRCT domain.

The protein belongs to the NAD-dependent DNA ligase family. LigA subfamily. The cofactor is Mg(2+). Mn(2+) is required as a cofactor.

It carries out the reaction NAD(+) + (deoxyribonucleotide)n-3'-hydroxyl + 5'-phospho-(deoxyribonucleotide)m = (deoxyribonucleotide)n+m + AMP + beta-nicotinamide D-nucleotide.. Functionally, DNA ligase that catalyzes the formation of phosphodiester linkages between 5'-phosphoryl and 3'-hydroxyl groups in double-stranded DNA using NAD as a coenzyme and as the energy source for the reaction. It is essential for DNA replication and repair of damaged DNA. The polypeptide is DNA ligase (Escherichia coli O9:H4 (strain HS)).